The sequence spans 668 residues: MSNYSTNGSRKIRISNSDDDSRETRFSIQPRNSHKTKEERYRDKEKERDHERHHDRERRDDRYRKVDSRDHRDRNRRSPAGSRTYCRDEPDRRRNNHSDRNRRDRSSERDRDNRSSKSKTKSPDSLRSKSSRKSQTPNHLPDDGKLFDRILDPNYKKKEKTVMEVEDVEMSPVEMLDEEEVSTFTFDDACGPVRPSNEPEEKDYKSEGDPESRPATPKTPLTPDYLENTIVSLNETLSDDEDKGPDDKYGKTPDKEQWESMTENEQKLHRDAMKKRREQRHREAVSKLPVYYPGLRGCQHISEYVILNVIAEGTYGEVFRGKNTRTDEVVALKRFKMEKEKEGFPITALREINMLLKAGAHENIVNVKEILVGSTKTEVYMAMEYVEHDVKSLIDKMRSRNQRFKTGQQKTLMSQLLSGIEHMHKLWILHRDLKTSNLLISHSGILKIADFGLAREYGEARDIEKRMKLTPIVVTLWYRSPELLLEPKTYSTPVDMWSIGCIMAEFIMMKPMFQGDSEPNQVHQIFQMMGTPTEQIWPDIKELKVWNMVEFPPVKPGQLRRIFKGEKLVNETGFDLLNGMLCLNPANRLTASEALQHDWFSEHPKAVPPEDLPVYPAKSELNAAPPENRRKNRLEALLADEEPERAALLRQFNVKAEQLKPSGFQLRG.

Residues 1–265 (MSNYSTNGSR…EQWESMTENE (265 aa)) are disordered. Basic and acidic residues-rich tracts occupy residues 35 to 73 (KTKE…DHRD), 85 to 127 (YCRD…DSLR), and 140 to 163 (LPDD…KTVM). Over residues 164–181 (EVEDVEMSPVEMLDEEEV) the composition is skewed to acidic residues. 2 stretches are compositionally biased toward basic and acidic residues: residues 197–212 (NEPE…DPES) and 245–265 (PDDK…TENE). Residues 304-600 (YVILNVIAEG…ASEALQHDWF (297 aa)) form the Protein kinase domain. Residues 310 to 318 (IAEGTYGEV) and lysine 333 each bind ATP. Catalysis depends on aspartate 432, which acts as the Proton acceptor.

It belongs to the protein kinase superfamily. CMGC Ser/Thr protein kinase family. CDC2/CDKX subfamily. In terms of tissue distribution, expressed in somatic cells and at varying levels throughout the germline (at protein level). Highly expressed in the germ line of hermaphrodites (at protein level).

Its subcellular location is the nucleus. The protein localises to the cytoplasm. It carries out the reaction L-seryl-[protein] + ATP = O-phospho-L-seryl-[protein] + ADP + H(+). It catalyses the reaction L-threonyl-[protein] + ATP = O-phospho-L-threonyl-[protein] + ADP + H(+). Probable cyclin-dependent kinase whose activity is most likely regulated by the cyclin cyl-1/Cylin-L. Acts partially redundantly with cdk-11.1 to ensure embryonic viability. In contrast to cdk-11.1, not essential for male and female fertility. In Caenorhabditis elegans, this protein is Cyclin-dependent kinase 11.2.